A 257-amino-acid chain; its full sequence is Thiazole synthase (257 aa).

Catalysis depends on Lys-96, which acts as the Schiff-base intermediate with DXP. Residues Gly-157, 184 to 185 (AG), and 206 to 207 (NT) contribute to the 1-deoxy-D-xylulose 5-phosphate site.

This sequence belongs to the ThiG family. In terms of assembly, homotetramer. Forms heterodimers with either ThiH or ThiS.

Its subcellular location is the cytoplasm. The catalysed reaction is [ThiS sulfur-carrier protein]-C-terminal-Gly-aminoethanethioate + 2-iminoacetate + 1-deoxy-D-xylulose 5-phosphate = [ThiS sulfur-carrier protein]-C-terminal Gly-Gly + 2-[(2R,5Z)-2-carboxy-4-methylthiazol-5(2H)-ylidene]ethyl phosphate + 2 H2O + H(+). It functions in the pathway cofactor biosynthesis; thiamine diphosphate biosynthesis. Functionally, catalyzes the rearrangement of 1-deoxy-D-xylulose 5-phosphate (DXP) to produce the thiazole phosphate moiety of thiamine. Sulfur is provided by the thiocarboxylate moiety of the carrier protein ThiS. In vitro, sulfur can be provided by H(2)S. This Bartonella henselae (strain ATCC 49882 / DSM 28221 / CCUG 30454 / Houston 1) (Rochalimaea henselae) protein is Thiazole synthase.